The primary structure comprises 494 residues: Solute carrier family 2, facilitated glucose transporter member 3 (494 aa).

The Cytoplasmic segment spans residues 1-10 (MGTTKVTAPL). A helical membrane pass occupies residues 11 to 32 (IFAISVATIGSFQFGYNTGVIN). The Extracellular segment spans residues 33-64 (APEAIIKDFLNYTLEERSEPPPSSVLLTSLWS). Residue asparagine 43 is glycosylated (N-linked (GlcNAc...) asparagine). The helical transmembrane segment at 65–85 (LSVAIFSVGGMIGSFSVGLFV) threads the bilayer. The Cytoplasmic portion of the chain corresponds to 86-90 (NRFGR). Residues 91 to 111 (GNSMLIVNLLAIAGGCLMGFC) form a helical membrane-spanning segment. Residues 112–118 (KIAESVE) are Extracellular-facing. A helical transmembrane segment spans residues 119-142 (MLILGRLIIGLFCGLCTGFVPMYI). The Cytoplasmic portion of the chain corresponds to 143–153 (GEISPTALRGA). The chain crosses the membrane as a helical span at residues 154–174 (FGTLNQLGIVIGILVAQIFGL). Glutamine 159 is a binding site for D-glucose. Over 175–183 (KVILGTEDL) the chain is Extracellular. The helical transmembrane segment at 184–204 (WPLLLGFTILPAIIQCAALPF) threads the bilayer. Topologically, residues 205–269 (CPESPRFLLI…LFRAPNYRQP (65 aa)) are cytoplasmic. Threonine 232 carries the post-translational modification Phosphothreonine. A helical transmembrane segment spans residues 270–290 (IIISIMLQLSQQLSGINAVFY). Positions 277–279 (QLS) are important for selectivity against fructose. Residues 280–281 (QQ) and asparagine 286 contribute to the D-glucose site. Over 291 to 304 (YSTGIFKDAGVQEP) the chain is Extracellular. A helical transmembrane segment spans residues 305–325 (VYATIGAGVVNTIFTVVSVFL). Asparagine 315 provides a ligand contact to D-glucose. Topologically, residues 326–331 (VERAGR) are cytoplasmic. Residues 332–352 (RTLHLIGLGGMAFCSILMTIS) form a helical membrane-spanning segment. Residues 353–363 (LLLKDNYSWMS) lie on the Extracellular side of the membrane. The N-linked (GlcNAc...) asparagine glycan is linked to asparagine 358. The chain crosses the membrane as a helical span at residues 364 to 389 (FICIGAILVFVAFFEIGPGPIPWFIV). D-glucose contacts are provided by glutamate 378 and tryptophan 386. Topologically, residues 390 to 399 (AELFGQGPRP) are cytoplasmic. The helical transmembrane segment at 400 to 420 (AAMAVAGCSNWTSNFLVGLLF) threads the bilayer. Over 421–429 (PSAAFYLGA) the chain is Extracellular. Residues 430-450 (YVFIVFTVFLVIFWVFTFFKV) form a helical membrane-spanning segment. Residues 451 to 494 (PETRGRTFEEITRAFEGQTQTGTRGEKGPIMEMNSIQPTKDTNA) are Cytoplasmic-facing. The interval 469–494 (TQTGTRGEKGPIMEMNSIQPTKDTNA) is disordered. Residues 484–494 (NSIQPTKDTNA) show a composition bias toward polar residues. The residue at position 485 (serine 485) is a Phosphoserine. Threonine 492 is subject to Phosphothreonine.

Belongs to the major facilitator superfamily. Sugar transporter (TC 2.A.1.1) family. Glucose transporter subfamily. Interacts with SMIM43; the interaction may promote SLC2A1-mediated glucose transport to meet the energy needs of mesendoderm differentiation.

It is found in the cell membrane. Its subcellular location is the perikaryon. The protein localises to the cell projection. It catalyses the reaction D-glucose(out) = D-glucose(in). It carries out the reaction D-galactose(in) = D-galactose(out). Its activity is regulated as follows. Deoxyglucose transport is inhibited by D-glucose, D-galactose and maltose. Galactose transport is inhibited by D-glucose and maltose. Its function is as follows. Facilitative glucose transporter. Can also mediate the uptake of various other monosaccharides across the cell membrane. Mediates the uptake of glucose, 2-deoxyglucose, galactose, mannose, xylose and fucose, and probably also dehydroascorbate. Does not mediate fructose transport. Required for mesendoderm differentiation. In Bos taurus (Bovine), this protein is Solute carrier family 2, facilitated glucose transporter member 3.